Reading from the N-terminus, the 222-residue chain is Hexitol phosphatase B (222 aa).

Asp13 (nucleophile) is an active-site residue. Positions 13 and 15 each coordinate a divalent metal cation. Residues 13–15 (DMD), 115–116 (SA), and Lys148 each bind substrate. Residue Asp15 is the Proton donor of the active site. Position 173 (Asp173) interacts with a divalent metal cation.

This sequence belongs to the HAD-like hydrolase superfamily. CbbY/CbbZ/Gph/YieH family. Mg(2+) serves as cofactor. Requires Mn(2+) as cofactor. The cofactor is Co(2+). Zn(2+) is required as a cofactor.

It carries out the reaction sugar phosphate + H2O = sugar + phosphate.. The catalysed reaction is 2-deoxy-D-glucose 6-phosphate + H2O = 2-deoxy-D-glucose + phosphate. The enzyme catalyses D-mannitol 1-phosphate + H2O = D-mannitol + phosphate. It catalyses the reaction D-sorbitol 6-phosphate + H2O = D-sorbitol + phosphate. In terms of biological role, sugar-phosphate phosphohydrolase that catalyzes the dephosphorylation of D-mannitol 1-phosphate and D-sorbitol 6-phosphate. Also catalyzes the dephosphorylation of 2-deoxyglucose 6-phosphate (2dGlu6P); this is a biologically important activity in vivo since it contributes to the elimination of this toxic compound and plays an important role in the resistance of E.coli to 2-deoxyglucose. To a lesser extent, is also able to dephosphorylate mannose 6-phosphate (Man6P), erythrose-4-phosphate, 2-deoxyribose-5-phosphate (2dRib5P), ribose-5-phosphate (Rib5P) and glucose-6-phosphate (Glu6P) in vitro. This chain is Hexitol phosphatase B, found in Escherichia coli (strain K12).